Consider the following 400-residue polypeptide: Cytoplasmic polyadenylated homeobox-like protein 2 (400 aa).

The segment at 1 to 29 (MSSQAFPAEEDHHNEERQTKKKRKTKHRH) is disordered. Residues 9-18 (EEDHHNEERQ) are compositionally biased toward basic and acidic residues. Over residues 19 to 29 (TKKKRKTKHRH) the composition is skewed to basic residues. Positions 24-83 (KTKHRHKFSEELLQELKEIFGENGYPDFTTRKTLANKFDCPVNVINNWFQNNRARLPPEE) form a DNA-binding region, homeobox.

The protein localises to the nucleus. This is Cytoplasmic polyadenylated homeobox-like protein 2 from Homo sapiens (Human).